The primary structure comprises 208 residues: Neuroendocrine protein 7B2 (208 aa).

An N-terminal signal peptide occupies residues 1 to 26; that stretch reads MGMYSAIPLALPMVLLMVYGLTPSLG. Residues cysteine 120 and cysteine 129 are joined by a disulfide bond. At serine 204 the chain carries Phosphoserine.

It belongs to the 7B2 family. Interacts with pcsk2 early in the secretory pathway. Dissociation occurs at later stages. Proteolytically cleaved in the Golgi by a furin-like convertase to generate bioactive peptides. Post-translationally, sulfated on tyrosine residues.

It localises to the secreted. In terms of biological role, acts as a molecular chaperone for pcsk2, preventing its premature activation in the regulated secretory pathway. Binds to inactive pcsk2 in the endoplasmic reticulum and facilitates its transport from there to later compartments of the secretory pathway where it is proteolytically matured and activated. Also required for cleavage of pcsk2 but does not appear to be involved in its folding. This is Neuroendocrine protein 7B2 (scg5.L) from Xenopus laevis (African clawed frog).